We begin with the raw amino-acid sequence, 394 residues long: Protein TsgA homolog (394 aa).

12 helical membrane passes run 11 to 31 (WISF…GMVL), 51 to 71 (FLNA…EIVP), 76 to 96 (LIFG…SHSL), 101 to 121 (LCMF…TFLI), 135 to 155 (LFTD…AAAI), 163 to 183 (YWVY…ALCF), 205 to 225 (LGVA…LGFI), 245 to 265 (SVVG…SAIL), 273 to 293 (IVTA…NTTD), 299 to 319 (WIIM…ITLG), 333 to 353 (FILT…GPIV), and 362 to 382 (LATT…LGFV).

The protein belongs to the major facilitator superfamily. TsgA family.

The protein resides in the cell inner membrane. The sequence is that of Protein TsgA homolog from Erwinia tasmaniensis (strain DSM 17950 / CFBP 7177 / CIP 109463 / NCPPB 4357 / Et1/99).